A 477-amino-acid polypeptide reads, in one-letter code: MSPQTETKASVGFQAGVKDYKLTYYTPEYETKDTDILAAFRVTPQPGVPPEEAGAAVAAESSTGTWTTVWTDGLTSLDRYKGRCYHIEPVAGEDNQWICYVAYPLDLFEEGSVTNMFTSIVGNVFGFKALRALRLEDLRIPVAYSKTFQGPPHGIQVERDKLNKYGRPLLGCTIKPKLGLSAKNYGRACYECLRGGLDFTKDDENVNSQPFMRWRDRFVFCAEALYKAQAETGEIKGHYLNATAGTCEEMIKRAVFARELGVPIVMHDYITGGFTANTSLAHYCRDNGLLLHIHRAMHAVIDRQKNHGMHFRVLAKALRMSGGDHIHSGTVVGKLEGEREMTLGFVDLLRDDFIEKDRARGIFFTQDWASMPGVIPVASGGIHVWHMPALTEIFGDDSVLQFGGGTLGHPWGNAPGAAANRVALEACVQARNEGRDLAREGNEIIRAACKWSPELAAACEVWKAIKFEFEPVDTIDN.

The propeptide occupies 1 to 2 (MS). P3 is subject to N-acetylproline. Substrate is bound by residues N123 and T173. K175 (proton acceptor) is an active-site residue. K177 contacts substrate. Residues K201, D203, and E204 each contribute to the Mg(2+) site. K201 bears the N6-carboxylysine mark. Residue H294 is the Proton acceptor of the active site. The substrate site is built by R295, H327, and S379.

The protein belongs to the RuBisCO large chain family. Type I subfamily. In terms of assembly, heterohexadecamer of 8 large chains and 8 small chains; disulfide-linked. The disulfide link is formed within the large subunit homodimers. The cofactor is Mg(2+). The disulfide bond which can form in the large chain dimeric partners within the hexadecamer appears to be associated with oxidative stress and protein turnover.

The protein resides in the plastid. The protein localises to the chloroplast. It catalyses the reaction 2 (2R)-3-phosphoglycerate + 2 H(+) = D-ribulose 1,5-bisphosphate + CO2 + H2O. The catalysed reaction is D-ribulose 1,5-bisphosphate + O2 = 2-phosphoglycolate + (2R)-3-phosphoglycerate + 2 H(+). RuBisCO catalyzes two reactions: the carboxylation of D-ribulose 1,5-bisphosphate, the primary event in carbon dioxide fixation, as well as the oxidative fragmentation of the pentose substrate in the photorespiration process. Both reactions occur simultaneously and in competition at the same active site. The polypeptide is Ribulose bisphosphate carboxylase large chain (Lolium perenne (Perennial ryegrass)).